A 149-amino-acid polypeptide reads, in one-letter code: UPF0178 protein SE_0451 (149 aa).

This sequence belongs to the UPF0178 family.

The sequence is that of UPF0178 protein SE_0451 from Staphylococcus epidermidis (strain ATCC 12228 / FDA PCI 1200).